The chain runs to 41 residues: Diuretic hormone 1 (41 aa).

Ile-41 is modified (isoleucine amide).

The protein resides in the secreted. Regulation of fluid secretion. May stimulate primary urine secretion by Malpighian tubules and causes a dose-dependent stimulation of cAMP levels in the tubules. This is Diuretic hormone 1 from Hyles lineata (White-lined sphinx moth).